The primary structure comprises 134 residues: Putative nickel-responsive regulator (134 aa).

The Ni(2+) site is built by His-78, His-89, His-91, and Cys-97.

Belongs to the transcriptional regulatory CopG/NikR family. It depends on Ni(2+) as a cofactor.

Transcriptional regulator. This chain is Putative nickel-responsive regulator, found in Chlorobium limicola (strain DSM 245 / NBRC 103803 / 6330).